We begin with the raw amino-acid sequence, 569 residues long: Potassium-transporting ATPase potassium-binding subunit (569 aa).

The next 10 membrane-spanning stretches (helical) occupy residues 3-23, 68-88, 136-156, 179-199, 259-279, 284-304, 384-404, 422-442, 490-510, and 534-554; these read LMEYTQLALFLGLLALMSPVL, AASLCAFSAAGFLMTFGVLML, VGLAYHNFVSAAAGLAVAVAV, VLYVLLPISLVLAVVLVGQGV, LQMLAIFIIPSSLVFTLGEAV, HAWTVWFVMACLFMVGTLSLY, GLYGMVLFILLTVFLAGLMVG, AMLALIIAATPPLLFSAVAAV, LALAMLIGRFGVMLPMLGVAG, and LLLTLVIVIVGALTYLPALAL.

The protein belongs to the KdpA family. As to quaternary structure, the system is composed of three essential subunits: KdpA, KdpB and KdpC.

It localises to the cell inner membrane. Part of the high-affinity ATP-driven potassium transport (or Kdp) system, which catalyzes the hydrolysis of ATP coupled with the electrogenic transport of potassium into the cytoplasm. This subunit binds the periplasmic potassium ions and delivers the ions to the membrane domain of KdpB through an intramembrane tunnel. The protein is Potassium-transporting ATPase potassium-binding subunit of Nitratidesulfovibrio vulgaris (strain DP4) (Desulfovibrio vulgaris).